Here is a 106-residue protein sequence, read N- to C-terminus: Envelope small membrane protein (106 aa).

The Virion surface portion of the chain corresponds to 1–11 (MMNLLNTSLEE). Residues 12-32 (NGSFLTALYVICEFVALYLLG) form a helical membrane-spanning segment. Residues 33 to 106 (RALQAFVQAA…ANFQNGKLHT (74 aa)) lie on the Intravirion side of the membrane.

This sequence belongs to the gammacoronaviruses E protein family. Homooligomer. Interacts with the M membrane protein in the budding compartment of the host cell, which is located between endoplasmic reticulum and the Golgi complex. The cytoplasmic tails of both proteins are important for this function. Interacts with Nucleoprotein.

It localises to the host Golgi apparatus membrane. Plays a central role in virus morphogenesis and assembly. Acts as a viroporin and self-assembles in host membranes forming pentameric protein-lipid pores that allow ion transport. Also plays a role in the induction of apoptosis. The sequence is that of Envelope small membrane protein from Gallus gallus (Chicken).